The sequence spans 105 residues: Large ribosomal subunit protein uL24 (105 aa).

The protein belongs to the universal ribosomal protein uL24 family. As to quaternary structure, part of the 50S ribosomal subunit.

In terms of biological role, one of two assembly initiator proteins, it binds directly to the 5'-end of the 23S rRNA, where it nucleates assembly of the 50S subunit. Functionally, one of the proteins that surrounds the polypeptide exit tunnel on the outside of the subunit. This Staphylococcus aureus (strain Mu3 / ATCC 700698) protein is Large ribosomal subunit protein uL24.